A 209-amino-acid chain; its full sequence is A-type ATP synthase subunit D (209 aa).

It belongs to the V-ATPase D subunit family. Has multiple subunits with at least A(3), B(3), C, D, E, F, H, I and proteolipid K(x).

The protein localises to the cell membrane. Component of the A-type ATP synthase that produces ATP from ADP in the presence of a proton gradient across the membrane. This is A-type ATP synthase subunit D from Sulfolobus acidocaldarius (strain ATCC 33909 / DSM 639 / JCM 8929 / NBRC 15157 / NCIMB 11770).